The primary structure comprises 358 residues: Sulfoquinovosyl glycerol transport ATP-binding protein SmoE (358 aa).

The region spanning 4-234 (VSLRKLDKSY…PESVFVGGFV (231 aa)) is the ABC transporter domain. 36–43 (GPSGCGKS) contacts ATP.

The protein belongs to the ABC transporter superfamily. In terms of assembly, the complex is probably composed of two ATP-binding proteins (SmoE), two transmembrane proteins (SmoG and SmoH) and a solute-binding protein (SmoF).

The protein localises to the cell inner membrane. In terms of biological role, part of the ABC transporter complex SmoEFGH involved in sulfoquinovosyl glycerol (SQGro) uptake. Responsible for energy coupling to the transport system. The polypeptide is Sulfoquinovosyl glycerol transport ATP-binding protein SmoE (Agrobacterium fabrum (strain C58 / ATCC 33970) (Agrobacterium tumefaciens (strain C58))).